Here is a 157-residue protein sequence, read N- to C-terminus: Probable succinate transporter subunit YjjB (157 aa).

A run of 4 helical transmembrane segments spans residues 8 to 28, 50 to 70, 87 to 107, and 129 to 149; these read FALA…AMVF, MILM…SMLV, VFTV…TAMI, and FLTA…PGLW.

It belongs to the ThrE exporter (TC 2.A.79) family. In terms of assembly, the transporter is composed of YjjB and YjjP.

The protein resides in the cell inner membrane. Its function is as follows. Involved in succinate export with YjjP. Both proteins are required for export. The polypeptide is Probable succinate transporter subunit YjjB (Escherichia coli (strain SE11)).